We begin with the raw amino-acid sequence, 572 residues long: Pentatricopeptide repeat-containing protein At5g15010, mitochondrial (572 aa).

The N-terminal 57 residues, 1–57, are a transit peptide targeting the mitochondrion; it reads MRGIFLIRSRLSIFRAPAVKCLRFSNVLPSLSNNCIVRLYMEPPVACVLPLGLCSMF. PPR repeat units lie at residues 160 to 194, 196 to 230, 231 to 261, 265 to 300, 301 to 335, 336 to 371, 372 to 406, 412 to 438, 439 to 473, and 474 to 508; these read SVRE…SPSL, NSQT…KLEM, GIDD…NKDK, DAKS…GVKH, DVVS…CIEP, DRKV…GIEP, NVVT…GLFP, HAFM…GCEP, TVET…TVGP, and DLSS…GMRP.

It belongs to the PPR family. P subfamily.

It is found in the mitochondrion. This chain is Pentatricopeptide repeat-containing protein At5g15010, mitochondrial, found in Arabidopsis thaliana (Mouse-ear cress).